The chain runs to 181 residues: Organ-specific protein S2 (181 aa).

Tandem repeats lie at residues 59–84, 85–110, 111–136, and 137–162. The tract at residues 59-162 is 4 X 26 AA tandem repeats; the sequence is HAKENMGAIG…NASAYGDNEI (104 aa). The disordered stretch occupies residues 94–181; sequence GEFEPRPNAS…PRPSMTKYNA (88 aa).

To organ specific protein P4. Expressed in stems.

This chain is Organ-specific protein S2, found in Pisum sativum (Garden pea).